We begin with the raw amino-acid sequence, 317 residues long: Lipoyl synthase (317 aa).

7 residues coordinate [4Fe-4S] cluster: cysteine 55, cysteine 60, cysteine 66, cysteine 81, cysteine 85, cysteine 88, and serine 292. The Radical SAM core domain maps to 67–281 (WEDREATFLI…ERYATEIGFA (215 aa)).

Belongs to the radical SAM superfamily. Lipoyl synthase family. [4Fe-4S] cluster serves as cofactor.

Its subcellular location is the cytoplasm. It catalyses the reaction [[Fe-S] cluster scaffold protein carrying a second [4Fe-4S](2+) cluster] + N(6)-octanoyl-L-lysyl-[protein] + 2 oxidized [2Fe-2S]-[ferredoxin] + 2 S-adenosyl-L-methionine + 4 H(+) = [[Fe-S] cluster scaffold protein] + N(6)-[(R)-dihydrolipoyl]-L-lysyl-[protein] + 4 Fe(3+) + 2 hydrogen sulfide + 2 5'-deoxyadenosine + 2 L-methionine + 2 reduced [2Fe-2S]-[ferredoxin]. The protein operates within protein modification; protein lipoylation via endogenous pathway; protein N(6)-(lipoyl)lysine from octanoyl-[acyl-carrier-protein]: step 2/2. Functionally, catalyzes the radical-mediated insertion of two sulfur atoms into the C-6 and C-8 positions of the octanoyl moiety bound to the lipoyl domains of lipoate-dependent enzymes, thereby converting the octanoylated domains into lipoylated derivatives. The chain is Lipoyl synthase from Mycolicibacterium gilvum (strain PYR-GCK) (Mycobacterium gilvum (strain PYR-GCK)).